Consider the following 447-residue polypeptide: Cysteine--tRNA ligase (447 aa).

Cysteine 28 is a binding site for Zn(2+). Residues 30-40 (PTVYNYIHIGN) carry the 'HIGH' region motif. Zn(2+) contacts are provided by cysteine 211, histidine 236, and glutamate 240. The 'KMSKS' region motif lies at 268–272 (KMSKS). An ATP-binding site is contributed by lysine 271.

The protein belongs to the class-I aminoacyl-tRNA synthetase family. In terms of assembly, monomer. It depends on Zn(2+) as a cofactor.

It localises to the cytoplasm. The enzyme catalyses tRNA(Cys) + L-cysteine + ATP = L-cysteinyl-tRNA(Cys) + AMP + diphosphate. The protein is Cysteine--tRNA ligase of Streptococcus agalactiae serotype III (strain NEM316).